The following is a 132-amino-acid chain: Peptide methionine sulfoxide reductase MsrB (132 aa).

Residues 8–130 (LDSWREELTE…NSASLKLVPR (123 aa)) form the MsrB domain. Zn(2+) contacts are provided by Cys-47, Cys-50, Cys-96, and Cys-99. Residue Cys-119 is the Nucleophile of the active site.

The protein belongs to the MsrB Met sulfoxide reductase family. The cofactor is Zn(2+).

It catalyses the reaction L-methionyl-[protein] + [thioredoxin]-disulfide + H2O = L-methionyl-(R)-S-oxide-[protein] + [thioredoxin]-dithiol. This chain is Peptide methionine sulfoxide reductase MsrB, found in Pseudomonas aeruginosa (strain UCBPP-PA14).